Consider the following 227-residue polypeptide: Cytochrome c oxidase subunit 2 (227 aa).

Residues 1-14 (MAYPFQLGLQDATS) are Mitochondrial intermembrane-facing. Residues 15–45 (PIMEELMNFHDHTLMIVFLISTLVLYIISLM) traverse the membrane as a helical segment. The Mitochondrial matrix segment spans residues 46–59 (LTTKLTHTSTMDAQ). Residues 60 to 87 (EVETIWTILPAVILILIALPSLRILYMM) form a helical membrane-spanning segment. Topologically, residues 88–227 (DEINNPALTV…YFENWSASMI (140 aa)) are mitochondrial intermembrane. Positions 161, 196, 198, 200, 204, and 207 each coordinate Cu cation. A Mg(2+)-binding site is contributed by E198. At Y218 the chain carries Phosphotyrosine.

This sequence belongs to the cytochrome c oxidase subunit 2 family. In terms of assembly, component of the cytochrome c oxidase (complex IV, CIV), a multisubunit enzyme composed of 14 subunits. The complex is composed of a catalytic core of 3 subunits MT-CO1, MT-CO2 and MT-CO3, encoded in the mitochondrial DNA, and 11 supernumerary subunits COX4I, COX5A, COX5B, COX6A, COX6B, COX6C, COX7A, COX7B, COX7C, COX8 and NDUFA4, which are encoded in the nuclear genome. The complex exists as a monomer or a dimer and forms supercomplexes (SCs) in the inner mitochondrial membrane with NADH-ubiquinone oxidoreductase (complex I, CI) and ubiquinol-cytochrome c oxidoreductase (cytochrome b-c1 complex, complex III, CIII), resulting in different assemblies (supercomplex SCI(1)III(2)IV(1) and megacomplex MCI(2)III(2)IV(2)). Found in a complex with TMEM177, COA6, COX18, COX20, SCO1 and SCO2. Interacts with TMEM177 in a COX20-dependent manner. Interacts with COX20. Interacts with COX16. Cu cation is required as a cofactor.

Its subcellular location is the mitochondrion inner membrane. It catalyses the reaction 4 Fe(II)-[cytochrome c] + O2 + 8 H(+)(in) = 4 Fe(III)-[cytochrome c] + 2 H2O + 4 H(+)(out). Component of the cytochrome c oxidase, the last enzyme in the mitochondrial electron transport chain which drives oxidative phosphorylation. The respiratory chain contains 3 multisubunit complexes succinate dehydrogenase (complex II, CII), ubiquinol-cytochrome c oxidoreductase (cytochrome b-c1 complex, complex III, CIII) and cytochrome c oxidase (complex IV, CIV), that cooperate to transfer electrons derived from NADH and succinate to molecular oxygen, creating an electrochemical gradient over the inner membrane that drives transmembrane transport and the ATP synthase. Cytochrome c oxidase is the component of the respiratory chain that catalyzes the reduction of oxygen to water. Electrons originating from reduced cytochrome c in the intermembrane space (IMS) are transferred via the dinuclear copper A center (CU(A)) of subunit 2 and heme A of subunit 1 to the active site in subunit 1, a binuclear center (BNC) formed by heme A3 and copper B (CU(B)). The BNC reduces molecular oxygen to 2 water molecules using 4 electrons from cytochrome c in the IMS and 4 protons from the mitochondrial matrix. This Maxomys surifer (Indomalayan maxomys) protein is Cytochrome c oxidase subunit 2 (MT-CO2).